Consider the following 155-residue polypeptide: MVWDATNIFLFIANILTLLYILYNDAVIPLSKGKTVLSVKLRSRGRWDGYIFVGIIVLLFVSNTFFREGPFSTSVLLAVMGVLFIYICFFRSSKAVFKETGLYYALLFFPYAKIERMNLSEDGVLVIETNRQRLMLFARSEKDLEKMLAVFTTYS.

A run of 3 helical transmembrane segments spans residues 8–28, 46–66, and 70–90; these read IFLF…DAVI, RWDG…NTFF, and PFST…ICFF.

The protein belongs to the UPF0266 family.

It is found in the cell membrane. The chain is UPF0266 membrane protein lin0773 from Listeria innocua serovar 6a (strain ATCC BAA-680 / CLIP 11262).